Here is a 163-residue protein sequence, read N- to C-terminus: Nucleotide-binding protein BCG9842_B4128 (163 aa).

The protein belongs to the YajQ family.

Nucleotide-binding protein. In Bacillus cereus (strain G9842), this protein is Nucleotide-binding protein BCG9842_B4128.